A 922-amino-acid polypeptide reads, in one-letter code: Cell surface glycoprotein 2 (922 aa).

The first 23 residues, 1–23, serve as a signal peptide directing secretion; that stretch reads MTGNSDKVRSLFLTALMVFSVFA. Asparagine 37, asparagine 56, asparagine 110, asparagine 220, asparagine 251, asparagine 262, and asparagine 292 each carry an N-linked (GlcNAc...) asparagine glycan. An N-linked (GalNAc...) asparagine glycan is attached at asparagine 307. Asparagine 319, asparagine 344, asparagine 396, asparagine 437, asparagine 490, asparagine 523, asparagine 557, asparagine 574, asparagine 587, asparagine 616, asparagine 700, asparagine 717, asparagine 809, asparagine 838, and asparagine 847 each carry an N-linked (GlcNAc...) asparagine glycan. Positions 816 to 899 are disordered; the sequence is PHQDTNGNEE…GTETTEAEGP (84 aa). The span at 835 to 850 shows a compositional bias: polar residues; sequence YTQNGSAVTDSANVTV. Residues 853–887 show a composition bias toward acidic residues; it reads EEPEDTPEDTPEDTPEDTPEDTPEDTPADTPEDTP. Residues 888–899 are compositionally biased toward low complexity; that stretch reads DTGTETTEAEGP. Residues 898-918 form a helical membrane-spanning segment; it reads GPGFTAAIALIALVAAALLAV. The short motif at 899–901 is the PGF sorting signal element; the sequence is PGF.

It belongs to the halobacterial S-layer protein family. Post-translationally, N-glycosylated on Asn-307; this N-linked glycan is a branched trisaccharide containing 2-amino-6-sulfo-2,6-dideoxy-glucose (sulfoquinovosamine). In terms of processing, O-glycosylated on Thr residues within the DTPE repeats in the C-terminal region; glycans consist of Glc-Gal disaccharides. Cleaved by the archaeosortase ArtA at the C-terminus, with removal of a short hydrophobic segment. Post-translationally, lipidation.

The protein localises to the secreted. It localises to the cell wall. Its subcellular location is the S-layer. The protein resides in the cell membrane. S-layer protein. The S-layer is a paracrystalline mono-layered assembly of proteins which coat the surface of the cell. In H.hispanica, the S-layer contains two different glycoproteins, Slg1 and Slg2, which share highly similar amino acid sequences. This Haloarcula hispanica (strain ATCC 33960 / DSM 4426 / JCM 8911 / NBRC 102182 / NCIMB 2187 / VKM B-1755) protein is Cell surface glycoprotein 2.